Reading from the N-terminus, the 277-residue chain is Large ribosomal subunit protein uL2 (277 aa).

Disordered regions lie at residues 37–60 (KNSTAGRNNNGHITTRHKGGGHKH) and 223–264 (VVMN…NKRT). A compositionally biased stretch (polar residues) spans 39 to 49 (STAGRNNNGHI). Basic residues predominate over residues 50-60 (TTRHKGGGHKH). Basic and acidic residues predominate over residues 229–244 (DHPHGGGEGRTGEARE).

This sequence belongs to the universal ribosomal protein uL2 family. In terms of assembly, part of the 50S ribosomal subunit. Forms a bridge to the 30S subunit in the 70S ribosome.

Functionally, one of the primary rRNA binding proteins. Required for association of the 30S and 50S subunits to form the 70S ribosome, for tRNA binding and peptide bond formation. It has been suggested to have peptidyltransferase activity; this is somewhat controversial. Makes several contacts with the 16S rRNA in the 70S ribosome. The sequence is that of Large ribosomal subunit protein uL2 from Neisseria gonorrhoeae (strain ATCC 700825 / FA 1090).